Reading from the N-terminus, the 2072-residue chain is Protein still life, isoform SIF type 1 (2072 aa).

Residue Gly-2 is the site of N-myristoyl glycine attachment. The region spanning Arg-29–Ser-147 is the WH1 domain. Disordered regions lie at residues Ser-153–Cys-188, Asp-245–Thr-284, Glu-327–Asp-355, Asn-459–Pro-486, Glu-502–Ser-576, Ala-618–Arg-655, and Ser-699–Ala-747. A compositionally biased stretch (polar residues) spans Val-275 to Thr-284. 3 stretches are compositionally biased toward low complexity: residues Ser-338–Thr-351, Asn-459–Arg-476, and Ser-522–Arg-553. Residues Ala-564–Ser-576 are compositionally biased toward polar residues. Residues Ile-634 to Arg-655 show a composition bias toward basic and acidic residues. A compositionally biased stretch (polar residues) spans Ser-732–Gly-743. Positions Thr-840–Phe-958 constitute a PH domain. A disordered region spans residues Gly-1088 to Pro-1119. The segment covering Ser-1100–Asn-1114 has biased composition (low complexity). The region spanning Lys-1121–Tyr-1188 is the RBD domain. A PDZ domain is found at Gln-1204–Thr-1293. Positions Ala-1403 to Ala-1424 are disordered. The span at Ser-1410 to Ala-1424 shows a compositional bias: low complexity. The 195-residue stretch at Lys-1436–Met-1630 folds into the DH domain. 3 disordered regions span residues Met-1803–Thr-1832, His-1844–Val-2039, and Pro-2051–Asn-2072. Low complexity-rich tracts occupy residues Gly-1811–Met-1821 and Gln-1926–His-1943. Residues His-1970 to Glu-1984 are compositionally biased toward basic and acidic residues. Residues Leu-2007–Ser-2022 are compositionally biased toward low complexity. A compositionally biased stretch (polar residues) spans Gln-2023–Pro-2032.

Expressed in both larval and adult brains, mainly in a subset of neurons but not in glia. In the adult eye is expressed in the two primary pigment cells in the subapical region of the eye. Also present in photoreceptors.

It is found in the synapse. Functionally, regulates synaptic differentiation through the organization of actin cytoskeleton possibly by activating Rho-like GTPases. Is likely a factor in the cascade of Rac1 or Cdc42 in the neurons. May play a role in maintaining proper septate junction functions. Required for eye development and most likely affects corneal lens-formation. The protein is Protein still life, isoform SIF type 1 (sif) of Drosophila melanogaster (Fruit fly).